The chain runs to 277 residues: Putative hydro-lyase BP1875 (277 aa).

This sequence belongs to the D-glutamate cyclase family.

The protein is Putative hydro-lyase BP1875 of Bordetella pertussis (strain Tohama I / ATCC BAA-589 / NCTC 13251).